Here is a 546-residue protein sequence, read N- to C-terminus: CTP synthase (546 aa).

Residues 1–266 form an amidoligase domain region; the sequence is MTTRYIFVTG…DELVVKRFSL (266 aa). Serine 14 lines the CTP pocket. Serine 14 contributes to the UTP binding site. Residues 15–20 and aspartate 72 each bind ATP; that span reads SLGKGI. Mg(2+)-binding residues include aspartate 72 and glutamate 140. CTP-binding positions include 147–149, 187–192, and lysine 223; these read DIE and KTKPTQ. Residues 187–192 and lysine 223 contribute to the UTP site; that span reads KTKPTQ. ATP is bound at residue 239-241; that stretch reads KDV. The Glutamine amidotransferase type-1 domain occupies 291-542; that stretch reads VIGMVGKYIE…VAAASAHQKR (252 aa). Glycine 352 serves as a coordination point for L-glutamine. Residue cysteine 379 is the Nucleophile; for glutamine hydrolysis of the active site. L-glutamine contacts are provided by residues 380–383, glutamate 403, and arginine 470; that span reads LGMQ. Active-site residues include histidine 515 and glutamate 517.

Belongs to the CTP synthase family. Homotetramer.

The catalysed reaction is UTP + L-glutamine + ATP + H2O = CTP + L-glutamate + ADP + phosphate + 2 H(+). It catalyses the reaction L-glutamine + H2O = L-glutamate + NH4(+). It carries out the reaction UTP + NH4(+) + ATP = CTP + ADP + phosphate + 2 H(+). Its pathway is pyrimidine metabolism; CTP biosynthesis via de novo pathway; CTP from UDP: step 2/2. Allosterically activated by GTP, when glutamine is the substrate; GTP has no effect on the reaction when ammonia is the substrate. The allosteric effector GTP functions by stabilizing the protein conformation that binds the tetrahedral intermediate(s) formed during glutamine hydrolysis. Inhibited by the product CTP, via allosteric rather than competitive inhibition. Catalyzes the ATP-dependent amination of UTP to CTP with either L-glutamine or ammonia as the source of nitrogen. Regulates intracellular CTP levels through interactions with the four ribonucleotide triphosphates. The protein is CTP synthase of Shewanella oneidensis (strain ATCC 700550 / JCM 31522 / CIP 106686 / LMG 19005 / NCIMB 14063 / MR-1).